A 273-amino-acid chain; its full sequence is 4-diphosphocytidyl-2-C-methyl-D-erythritol kinase (273 aa).

Lys-12 is a catalytic residue. 90–100 (PVASGIGGGSA) provides a ligand contact to ATP. Residue Asp-122 is part of the active site.

This sequence belongs to the GHMP kinase family. IspE subfamily.

The catalysed reaction is 4-CDP-2-C-methyl-D-erythritol + ATP = 4-CDP-2-C-methyl-D-erythritol 2-phosphate + ADP + H(+). Its pathway is isoprenoid biosynthesis; isopentenyl diphosphate biosynthesis via DXP pathway; isopentenyl diphosphate from 1-deoxy-D-xylulose 5-phosphate: step 3/6. In terms of biological role, catalyzes the phosphorylation of the position 2 hydroxy group of 4-diphosphocytidyl-2C-methyl-D-erythritol. The chain is 4-diphosphocytidyl-2-C-methyl-D-erythritol kinase from Paracoccus denitrificans (strain Pd 1222).